Consider the following 231-residue polypeptide: 2-C-methyl-D-erythritol 4-phosphate cytidylyltransferase (231 aa).

Belongs to the IspD/TarI cytidylyltransferase family. IspD subfamily. In terms of assembly, homodimer.

It catalyses the reaction 2-C-methyl-D-erythritol 4-phosphate + CTP + H(+) = 4-CDP-2-C-methyl-D-erythritol + diphosphate. It participates in isoprenoid biosynthesis; isopentenyl diphosphate biosynthesis via DXP pathway; isopentenyl diphosphate from 1-deoxy-D-xylulose 5-phosphate: step 2/6. Catalyzes the formation of 4-diphosphocytidyl-2-C-methyl-D-erythritol from CTP and 2-C-methyl-D-erythritol 4-phosphate (MEP). This Citrobacter koseri (strain ATCC BAA-895 / CDC 4225-83 / SGSC4696) protein is 2-C-methyl-D-erythritol 4-phosphate cytidylyltransferase.